The following is an 850-amino-acid chain: MYRQEATTVTILAQAPPNWPAPAFDISGFTSAFRPSRRAQRSNTTMGSIDTNSTDAWHTFAIPRLGIPAMRITDGPNGARGTRYFNGVPSACLPCGTALGATFDTDLLFKLGRLLAAECKAKGAHVLLGPTINIQRGPLGGRGFESFSEDPVLSGNSAASYCAGVKDLGIVPTLKHLVCNDQEHERIAVSAMVTERALREIYLMPFQLAIKNARPGALMTSYNKVNGLHASEDPGLLNHIIRKEWGFEGLIMSDWFGTYSVASAVNAGLDLEMPGPTRFRGPALMHALTSNKVSEKTLDDRVRKVLELVQLTSRAGIPEYAPAQKLDRVEDRVLLRQAAADSIVLLKNANEVLPLDPRKKTLVIGPNADIAAYCGGGSASLLAYYTVTPRQGIAEKCEEVVFSQGCYGHKELPLLGDHLKTETGERGYTFRVYTEPATYEDRQPVDVLHMTNSCAFLMDYSHPKISGDTYYATLEGRFEPTESGVYELGLTVAGTGLLYIDGELVIDNKTKQRHGTSFFGIGTVEERGERYLEAGRQHHVFVEYSTAPTSNLKHHGVVSFGPGGVRLGGCRKLDAETAIKQAVQLAAETEQVVVCVGMNGNWESEGFDRPHMDLPPGTDNLVRAVIEAQPNAVIVVQSGTPVTMPWADQAKALVQAWYGGSEGGNGIADVLFGDVNPSAKLPLTFPRDIAHNPSYLSYRSERGRVLYSEDVYVGYRYYDKVKQAPLFHFGHGLSYTTFKLSGLNVQETDPQASDISAEVVQIYVRPPTTASVGRPVRELKGYEKTMLHPGETKEISVTVPMGVATSFWDEGRSAWLSEKGTYAIEVVGTGERNMLSAPLCVQVSRYWNGL.

Asn43 and Asn52 each carry an N-linked (GlcNAc...) asparagine glycan. Asp254 is an active-site residue. The 161-residue stretch at 423-583 (TGERGYTFRV…DAETAIKQAV (161 aa)) folds into the PA14 domain. N-linked (GlcNAc...) asparagine glycosylation occurs at Asn508.

It belongs to the glycosyl hydrolase 3 family.

The protein resides in the secreted. It catalyses the reaction Hydrolysis of terminal, non-reducing beta-D-glucosyl residues with release of beta-D-glucose.. The protein operates within glycan metabolism; cellulose degradation. In terms of biological role, beta-glucosidases are one of a number of cellulolytic enzymes involved in the degradation of cellulosic biomass. Catalyzes the last step releasing glucose from the inhibitory cellobiose. The chain is Probable beta-glucosidase J (bglJ) from Emericella nidulans (strain FGSC A4 / ATCC 38163 / CBS 112.46 / NRRL 194 / M139) (Aspergillus nidulans).